The following is a 445-amino-acid chain: tRNA modification GTPase MnmE (445 aa).

Residues arginine 20, glutamate 79, and lysine 119 each coordinate (6S)-5-formyl-5,6,7,8-tetrahydrofolate. The TrmE-type G domain maps to glycine 215–glutamate 371. Asparagine 225 serves as a coordination point for K(+). GTP contacts are provided by residues asparagine 225–serine 230, serine 244–threonine 250, and aspartate 269–glycine 272. Serine 229 serves as a coordination point for Mg(2+). K(+)-binding residues include serine 244, isoleucine 246, and threonine 249. Mg(2+) is bound at residue threonine 250. Lysine 445 provides a ligand contact to (6S)-5-formyl-5,6,7,8-tetrahydrofolate.

It belongs to the TRAFAC class TrmE-Era-EngA-EngB-Septin-like GTPase superfamily. TrmE GTPase family. As to quaternary structure, homodimer. Heterotetramer of two MnmE and two MnmG subunits. It depends on K(+) as a cofactor.

The protein resides in the cytoplasm. Its function is as follows. Exhibits a very high intrinsic GTPase hydrolysis rate. Involved in the addition of a carboxymethylaminomethyl (cmnm) group at the wobble position (U34) of certain tRNAs, forming tRNA-cmnm(5)s(2)U34. This chain is tRNA modification GTPase MnmE, found in Rickettsia canadensis (strain McKiel).